Consider the following 207-residue polypeptide: Large ribosomal subunit protein uL4 (207 aa).

The protein belongs to the universal ribosomal protein uL4 family. As to quaternary structure, part of the 50S ribosomal subunit.

Functionally, one of the primary rRNA binding proteins, this protein initially binds near the 5'-end of the 23S rRNA. It is important during the early stages of 50S assembly. It makes multiple contacts with different domains of the 23S rRNA in the assembled 50S subunit and ribosome. Its function is as follows. Forms part of the polypeptide exit tunnel. The sequence is that of Large ribosomal subunit protein uL4 from Geobacter metallireducens (strain ATCC 53774 / DSM 7210 / GS-15).